Here is a 380-residue protein sequence, read N- to C-terminus: Cytochrome b (380 aa).

The next 4 membrane-spanning stretches (helical) occupy residues 34 to 54, 78 to 99, 114 to 134, and 179 to 199; these read FGSL…FLAM, WLLR…YFHI, WNIG…GYVL, and FFTF…IHLL. His-84 and His-98 together coordinate heme b. Positions 183 and 197 each coordinate heme b. Position 202 (His-202) interacts with a ubiquinone. The next 4 helical transmembrane spans lie at 227–247, 289–309, 321–341, and 348–368; these read YKDL…STFA, LGGV…PIIH, IAKT…WIGG, and FITI…LLIP.

The protein belongs to the cytochrome b family. The cytochrome bc1 complex contains 3 respiratory subunits (MT-CYB, CYC1 and UQCRFS1), 2 core proteins (UQCRC1 and UQCRC2) and probably 6 low-molecular weight proteins. Heme b serves as cofactor.

It localises to the mitochondrion inner membrane. Functionally, component of the ubiquinol-cytochrome c reductase complex (complex III or cytochrome b-c1 complex) that is part of the mitochondrial respiratory chain. The b-c1 complex mediates electron transfer from ubiquinol to cytochrome c. Contributes to the generation of a proton gradient across the mitochondrial membrane that is then used for ATP synthesis. In Pelophylax nigromaculatus (Black-spotted frog), this protein is Cytochrome b (mt-cyb).